Consider the following 173-residue polypeptide: Urease accessory protein UreE (173 aa).

A disordered region spans residues Pro-136–Gly-173. Basic and acidic residues predominate over residues Gln-146–Gly-173.

This sequence belongs to the UreE family.

Its subcellular location is the cytoplasm. Functionally, involved in urease metallocenter assembly. Binds nickel. Probably functions as a nickel donor during metallocenter assembly. The sequence is that of Urease accessory protein UreE from Beijerinckia indica subsp. indica (strain ATCC 9039 / DSM 1715 / NCIMB 8712).